Consider the following 316-residue polypeptide: MTNTVKLTEFINDNSNLRVLQGQECVAGKEITVSDVYRPGLELSGYFDFYPADRVQLLGRTEISYAARLDHDLRRKVFEKICQKETPCLLVSRNLPVPVELKEAAEAAGTPILISNDATTYLMSMITQYLAVKLAERSSVHGVLVEVFGMGVLLTGESGVGKSETALALVQHGHRLIADDRVDVYQRDHETVVGEAPRILKHLMEIRGIGIIDVLKLFGIGAIKDETEISLVINLTNWDSKANYDRLGFQENTRIICGIAVTQVTIPVKVGRNMENIVEVAVMNFRAKAMGFDAAKTFDENLTSLIAENSEEEKRG.

Catalysis depends on residues His-141 and Lys-162. An ATP-binding site is contributed by Gly-156–Ser-163. Ser-163 lines the Mg(2+) pocket. The active-site Proton acceptor; for phosphorylation activity. Proton donor; for dephosphorylation activity is the Asp-180. Positions Met-204–Asp-213 are important for the catalytic mechanism of both phosphorylation and dephosphorylation. Glu-205 serves as a coordination point for Mg(2+). Arg-246 is an active-site residue. The interval Pro-267–Arg-272 is important for the catalytic mechanism of dephosphorylation.

This sequence belongs to the HPrK/P family. As to quaternary structure, homohexamer. The cofactor is Mg(2+).

The enzyme catalyses [HPr protein]-L-serine + ATP = [HPr protein]-O-phospho-L-serine + ADP + H(+). It carries out the reaction [HPr protein]-O-phospho-L-serine + phosphate + H(+) = [HPr protein]-L-serine + diphosphate. Functionally, catalyzes the ATP- as well as the pyrophosphate-dependent phosphorylation of a specific serine residue in HPr, a phosphocarrier protein of the phosphoenolpyruvate-dependent sugar phosphotransferase system (PTS). HprK/P also catalyzes the pyrophosphate-producing, inorganic phosphate-dependent dephosphorylation (phosphorolysis) of seryl-phosphorylated HPr (P-Ser-HPr). The two antagonistic activities of HprK/P are regulated by several intracellular metabolites, which change their concentration in response to the absence or presence of rapidly metabolisable carbon sources (glucose, fructose, etc.) in the growth medium. Therefore, by controlling the phosphorylation state of HPr, HPrK/P is a sensor enzyme that plays a major role in the regulation of carbon metabolism and sugar transport: it mediates carbon catabolite repression (CCR), and regulates PTS-catalyzed carbohydrate uptake and inducer exclusion. This Lactobacillus delbrueckii subsp. bulgaricus (strain ATCC 11842 / DSM 20081 / BCRC 10696 / JCM 1002 / NBRC 13953 / NCIMB 11778 / NCTC 12712 / WDCM 00102 / Lb 14) protein is HPr kinase/phosphorylase.